A 420-amino-acid chain; its full sequence is uncharacterized protein (420 aa).

One can recognise a VWFA domain in the interval asparagine 43–methionine 215. Residues leucine 389–histidine 420 are disordered.

This is an uncharacterized protein from Synechocystis sp. (strain ATCC 27184 / PCC 6803 / Kazusa).